A 594-amino-acid polypeptide reads, in one-letter code: Arginine--tRNA ligase (594 aa).

The short motif at 133 to 143 (ANPTGPMNIVS) is the 'HIGH' region element.

The protein belongs to the class-I aminoacyl-tRNA synthetase family. As to quaternary structure, monomer.

The protein localises to the cytoplasm. It carries out the reaction tRNA(Arg) + L-arginine + ATP = L-arginyl-tRNA(Arg) + AMP + diphosphate. The sequence is that of Arginine--tRNA ligase from Leptospira biflexa serovar Patoc (strain Patoc 1 / Ames).